A 372-amino-acid chain; its full sequence is DNA replication and repair protein RecF (372 aa).

Position 30 to 37 (30 to 37) interacts with ATP; the sequence is GENAQGKT.

The protein belongs to the RecF family.

Its subcellular location is the cytoplasm. In terms of biological role, the RecF protein is involved in DNA metabolism; it is required for DNA replication and normal SOS inducibility. RecF binds preferentially to single-stranded, linear DNA. It also seems to bind ATP. This Geobacillus thermodenitrificans (strain NG80-2) protein is DNA replication and repair protein RecF.